The chain runs to 439 residues: Transmembrane protease serine 11F (439 aa).

Residues 1–33 (MMYAPVEFSQTAYPRIEYQRRQQQFWDPIRLAL) are Cytoplasmic-facing. Residues 34 to 54 (FTLAIVAIVGITIGIVTHFVV) traverse the membrane as a helical; Signal-anchor for type II membrane protein segment. At 55-439 (EDDKSFYYLA…RDWIASKTGL (385 aa)) the chain is on the extracellular side. Positions 58 to 176 (KSFYYLASFQ…PSFSLTPIDS (119 aa)) constitute an SEA domain. Positions 207-438 (IVQGRETAME…YRDWIASKTG (232 aa)) constitute a Peptidase S1 domain. Cys-234 and Cys-250 are joined by a disulfide. Catalysis depends on charge relay system residues His-249 and Asp-294. 2 cysteine pairs are disulfide-bonded: Cys-359–Cys-375 and Cys-386–Cys-414. Ser-390 functions as the Charge relay system in the catalytic mechanism.

The protein belongs to the peptidase S1 family.

It localises to the membrane. In terms of biological role, probable serine protease. The sequence is that of Transmembrane protease serine 11F (Tmprss11f) from Mus musculus (Mouse).